The sequence spans 535 residues: Dimethylaniline monooxygenase [N-oxide-forming] 2 (535 aa).

Ala2 is modified (N-acetylalanine). FAD-binding positions include 9–13 (GAGVS), Glu32, 40–41 (LW), and 61–62 (NT). Residues 60–61 (TN) and 195–198 (SASD) contribute to the NADP(+) site. Lys492 is covalently cross-linked (Glycyl lysine isopeptide (Lys-Gly) (interchain with G-Cter in SUMO)). The helical transmembrane segment at 510 to 530 (FPVSFLLKFLGLFALVLAFLF) threads the bilayer.

This sequence belongs to the FMO family. The cofactor is FAD. Mg(2+) is required as a cofactor. As to expression, lung.

The protein resides in the microsome membrane. The protein localises to the endoplasmic reticulum membrane. The catalysed reaction is N,N-dimethylaniline + NADPH + O2 + H(+) = N,N-dimethylaniline N-oxide + NADP(+) + H2O. Catalyzes the oxidative metabolism of numerous xenobiotics, including mainly therapeutic drugs and insecticides that contain a soft nucleophile, most commonly nitrogen and sulfur and participates to their bioactivation. Most drug substrates are tertiary amines such as prochlorperazine and trifluoperazine which are N-oxygenated to form the N-oxide, or sulfides such as thiourea and ethionamide, which are S-oxygenated to the sulfoxide. Others include primary alkylamines such as N-dodecylamine and octan-1-amine that are sequentially monooxygenated to oximes through intermediate hydroxylamines and both steps are NADPH- and oxygen-dependent. Also metabolized N-Deacetyl ketoconazole (DAK) to N-hydroxy-DAK and appears to further metabolizes N-hydroxy-DAK to two others metabolites. Also catalyzes S-oxygenation of the thioether-containing organophosphate insecticides, phorate and disulfoton. The chain is Dimethylaniline monooxygenase [N-oxide-forming] 2 from Oryctolagus cuniculus (Rabbit).